We begin with the raw amino-acid sequence, 487 residues long: L-carnitine dehydrogenase/betainyl-CoA thioesterase (487 aa).

Positions 1–327 (MTTAAIIGGG…DAALKPKALP (327 aa)) are L-carnitine dehydrogenase. 8-13 (GGGVIG) lines the NAD(+) pocket. Positions 328–487 (DLDTADLTQP…GAGSAIRKPA (160 aa)) are betainyl-CoA thioesterase.

It in the N-terminal section; belongs to the 3-hydroxyacyl-CoA dehydrogenase family. L-carnitine dehydrogenase subfamily. In the C-terminal section; belongs to the betainyl-CoA thioesterase family. Homodimer.

The protein resides in the cytoplasm. It carries out the reaction carnitine + NAD(+) = 3-dehydrocarnitine + NADH + H(+). The catalysed reaction is N,N,N-trimethylglycyl-CoA + H2O = glycine betaine + CoA + H(+). It functions in the pathway amine and polyamine metabolism; carnitine metabolism. Functionally, multifunctional enzyme that catalyzes the NAD(+)-dependent oxidation of L-carnitine to 3-dehydrocarnitine and the cleavage of betainyl-CoA (N,N,N-trimethylglycyl-CoA) into glycine betaine and coenzyme A. The sequence is that of L-carnitine dehydrogenase/betainyl-CoA thioesterase from Ruegeria pomeroyi (strain ATCC 700808 / DSM 15171 / DSS-3) (Silicibacter pomeroyi).